The primary structure comprises 151 residues: Small ribosomal subunit protein uS15 (151 aa).

This sequence belongs to the universal ribosomal protein uS15 family. Component of the small ribosomal subunit. Part of the small subunit (SSU) processome, composed of more than 70 proteins and the RNA chaperone small nucleolar RNA (snoRNA) U3.

It localises to the cytoplasm. Its subcellular location is the nucleus. The protein localises to the nucleolus. Its function is as follows. Component of the small ribosomal subunit. The ribosome is a large ribonucleoprotein complex responsible for the synthesis of proteins in the cell. Part of the small subunit (SSU) processome, first precursor of the small eukaryotic ribosomal subunit. During the assembly of the SSU processome in the nucleolus, many ribosome biogenesis factors, an RNA chaperone and ribosomal proteins associate with the nascent pre-rRNA and work in concert to generate RNA folding, modifications, rearrangements and cleavage as well as targeted degradation of pre-ribosomal RNA by the RNA exosome. The sequence is that of Small ribosomal subunit protein uS15 (rps-13) from Caenorhabditis elegans.